Reading from the N-terminus, the 199-residue chain is Recombination protein RecR (199 aa).

Residues cysteine 58–cysteine 73 form a C4-type zinc finger. Residues glycine 81–proline 176 form the Toprim domain.

Belongs to the RecR family.

Its function is as follows. May play a role in DNA repair. It seems to be involved in an RecBC-independent recombinational process of DNA repair. It may act with RecF and RecO. This Dinoroseobacter shibae (strain DSM 16493 / NCIMB 14021 / DFL 12) protein is Recombination protein RecR.